Here is a 478-residue protein sequence, read N- to C-terminus: Poly(A) RNA polymerase cid11 (478 aa).

2 residues coordinate Mg(2+): D106 and D108. The region spanning 263 to 317 is the PAP-associated domain; sequence SLGRLLIDFFYYYGFSFNYLDSVVSVRSGTVLNKQEKGWAMEVNNSLCVEEPFNT. Residues 428–447 are disordered; the sequence is QSYENKANRDSDFQGQTSLT.

This sequence belongs to the DNA polymerase type-B-like family. It depends on Mg(2+) as a cofactor. The cofactor is Mn(2+).

Its subcellular location is the cytoplasm. The protein localises to the nucleus. It catalyses the reaction RNA(n) + ATP = RNA(n)-3'-adenine ribonucleotide + diphosphate. This Schizosaccharomyces pombe (strain 972 / ATCC 24843) (Fission yeast) protein is Poly(A) RNA polymerase cid11 (cid11).